A 370-amino-acid chain; its full sequence is GTPase Obg (370 aa).

The Obg domain occupies 1 to 159 (MKFIDEARIE…RMVRLELKVL (159 aa)). Residues 127 to 147 (NLHFKSSTNRAPRQKTDGKPG) form a disordered region. Residues 160-334 (ADVGLLGMPN…LCYAVYDYLA (175 aa)) enclose the OBG-type G domain. Residues 166 to 173 (GMPNAGKS), 191 to 195 (FTTLA), 213 to 216 (DIPG), 284 to 287 (NKLD), and 315 to 317 (SAL) each bind GTP. 2 residues coordinate Mg(2+): serine 173 and threonine 193.

The protein belongs to the TRAFAC class OBG-HflX-like GTPase superfamily. OBG GTPase family. As to quaternary structure, monomer. It depends on Mg(2+) as a cofactor.

It is found in the cytoplasm. Its function is as follows. An essential GTPase which binds GTP, GDP and possibly (p)ppGpp with moderate affinity, with high nucleotide exchange rates and a fairly low GTP hydrolysis rate. Plays a role in control of the cell cycle, stress response, ribosome biogenesis and in those bacteria that undergo differentiation, in morphogenesis control. This is GTPase Obg from Paraburkholderia phymatum (strain DSM 17167 / CIP 108236 / LMG 21445 / STM815) (Burkholderia phymatum).